Reading from the N-terminus, the 429-residue chain is Glutamate-1-semialdehyde 2,1-aminomutase (429 aa).

Lys265 carries the N6-(pyridoxal phosphate)lysine modification.

The protein belongs to the class-III pyridoxal-phosphate-dependent aminotransferase family. HemL subfamily. As to quaternary structure, homodimer. Pyridoxal 5'-phosphate serves as cofactor.

The protein localises to the cytoplasm. The enzyme catalyses (S)-4-amino-5-oxopentanoate = 5-aminolevulinate. It functions in the pathway porphyrin-containing compound metabolism; protoporphyrin-IX biosynthesis; 5-aminolevulinate from L-glutamyl-tRNA(Glu): step 2/2. The polypeptide is Glutamate-1-semialdehyde 2,1-aminomutase (Shewanella halifaxensis (strain HAW-EB4)).